The primary structure comprises 138 residues: MSEKIQVLGSRKGLTPALQHYSVVNVADNSGGKEAMIIGVYGYRGVLRRVPFANIADMVMVSIKKGTPEVRKQKFRAVIVRQRMPYRRPDGTWISFEDNAVVIINPDGTPKGTEVRGPIAREAAERWPKIASLATLVV.

It belongs to the universal ribosomal protein uL14 family. Part of the 50S ribosomal subunit. Forms a cluster with proteins L3 and L24e, part of which may contact the 16S rRNA in 2 intersubunit bridges. Contacts initiation factor aIF-6.

It localises to the cytoplasm. Functionally, binds to 23S rRNA. Forms part of two intersubunit bridges in the 70S ribosome. The sequence is that of Large ribosomal subunit protein uL14 from Saccharolobus solfataricus (strain ATCC 35092 / DSM 1617 / JCM 11322 / P2) (Sulfolobus solfataricus).